The following is an 85-amino-acid chain: Dual endothelin-1/VEGF signal peptide receptor (85 aa).

Residues 1 to 18 (MTMFKGSNEMKSRWNWGS) lie on the Extracellular side of the membrane. The helical transmembrane segment at 19 to 37 (ITCIICFTCVGSQLSMSSS) threads the bilayer. Topologically, residues 38–85 (KASNFSGPLQLYQRELEIFIVLTDVPNYRLIKENSHLHTTIVDQGRTV) are cytoplasmic.

N-glycosylated. As to expression, expressed in kidney. Expressed in endothelial cells.

Its subcellular location is the cell membrane. Functionally, dual receptor for both endothelin-1 and the signal sequence of vascular endothelial growth factor A. Does not act as a receptor for angiotensin-2. Does not bind the VEGFA mature protein. May play a role in angiogenesis with a significant role in cardiovascular and neural development. In Homo sapiens (Human), this protein is Dual endothelin-1/VEGF signal peptide receptor.